The sequence spans 183 residues: MTGNIVARRYAKALFALAKKAGKKAPAEYGKDLEAFASVLEGSPDLLKVFANPIISADVKKSVLSGVAGKIGLKPMVINFLSLLADKDRLPCVLEVSALYRTLLDEAEGVMRGQLVTAFALADARQDQIKVKLEKQSGKKLVLSFAVDPSIIGGVVLKVGDKVLDASLRAQLEILKEQIKRGE.

This sequence belongs to the ATPase delta chain family. F-type ATPases have 2 components, F(1) - the catalytic core - and F(0) - the membrane proton channel. F(1) has five subunits: alpha(3), beta(3), gamma(1), delta(1), epsilon(1). F(0) has three main subunits: a(1), b(2) and c(10-14). The alpha and beta chains form an alternating ring which encloses part of the gamma chain. F(1) is attached to F(0) by a central stalk formed by the gamma and epsilon chains, while a peripheral stalk is formed by the delta and b chains.

The protein localises to the cell inner membrane. Its function is as follows. F(1)F(0) ATP synthase produces ATP from ADP in the presence of a proton or sodium gradient. F-type ATPases consist of two structural domains, F(1) containing the extramembraneous catalytic core and F(0) containing the membrane proton channel, linked together by a central stalk and a peripheral stalk. During catalysis, ATP synthesis in the catalytic domain of F(1) is coupled via a rotary mechanism of the central stalk subunits to proton translocation. This protein is part of the stalk that links CF(0) to CF(1). It either transmits conformational changes from CF(0) to CF(1) or is implicated in proton conduction. In Solidesulfovibrio magneticus (strain ATCC 700980 / DSM 13731 / RS-1) (Desulfovibrio magneticus), this protein is ATP synthase subunit delta.